Consider the following 474-residue polypeptide: ATP-dependent rRNA helicase RRP3 (474 aa).

The span at 1–10 shows a compositional bias: basic residues; it reads MPSMKRRKLS. Residues 1-43 form a disordered region; sequence MPSMKRRKLSHTPPQGEAEDGFSDSETSQASLQETPGNDEKIE. A compositionally biased stretch (polar residues) spans 24–36; it reads DSETSQASLQETP. Positions 48–76 match the Q motif motif; sequence KSFKDLGIIDSLCEACDSLGYKAPTQIQA. A Helicase ATP-binding domain is found at 79 to 250; that stretch reads IPLALQGRDL…RASLSNPLRV (172 aa). Residue 92–99 coordinates ATP; it reads AETGSGKT. Positions 198-201 match the DEAD box motif; it reads DEAD. A Helicase C-terminal domain is found at 278-422; it reads YLIYLLNEFP…EYKVEKEEVM (145 aa). The disordered stretch occupies residues 442 to 474; that stretch reads LHENRGKKGATLRNRRIGKGAKRSRDEMDREEG. Basic residues predominate over residues 448-463; it reads KKGATLRNRRIGKGAK. Positions 464–474 are enriched in basic and acidic residues; it reads RSRDEMDREEG.

It belongs to the DEAD box helicase family. DDX47/RRP3 subfamily. Interacts with the SSU processome.

Its subcellular location is the nucleus. It catalyses the reaction ATP + H2O = ADP + phosphate + H(+). Functionally, ATP-dependent rRNA helicase required for pre-ribosomal RNA processing. Involved in the maturation of the 35S-pre-rRNA and to its cleavage to mature 18S rRNA. In Coccidioides immitis (strain RS) (Valley fever fungus), this protein is ATP-dependent rRNA helicase RRP3.